Consider the following 292-residue polypeptide: Protoheme IX farnesyltransferase (292 aa).

9 consecutive transmembrane segments (helical) span residues 12–32 (ITWL…PQAS), 43–63 (LLRL…TAAL), 94–114 (LAFG…GVNL), 115–135 (LSAG…TPMK), 144–164 (VGAI…AGGL), 169–189 (WVLF…IAWM), 216–236 (IVIY…LGMS), 239–259 (LYLV…VRVA), and 267–287 (ARGV…LMLL).

The protein belongs to the UbiA prenyltransferase family. Protoheme IX farnesyltransferase subfamily.

Its subcellular location is the cell inner membrane. The catalysed reaction is heme b + (2E,6E)-farnesyl diphosphate + H2O = Fe(II)-heme o + diphosphate. Its pathway is porphyrin-containing compound metabolism; heme O biosynthesis; heme O from protoheme: step 1/1. In terms of biological role, converts heme B (protoheme IX) to heme O by substitution of the vinyl group on carbon 2 of heme B porphyrin ring with a hydroxyethyl farnesyl side group. This is Protoheme IX farnesyltransferase from Solibacter usitatus (strain Ellin6076).